A 122-amino-acid polypeptide reads, in one-letter code: Large ribosomal subunit protein bL12 (122 aa).

This sequence belongs to the bacterial ribosomal protein bL12 family. Homodimer. Part of the ribosomal stalk of the 50S ribosomal subunit. Forms a multimeric L10(L12)X complex, where L10 forms an elongated spine to which 2 to 4 L12 dimers bind in a sequential fashion. Binds GTP-bound translation factors.

Forms part of the ribosomal stalk which helps the ribosome interact with GTP-bound translation factors. Is thus essential for accurate translation. This Lacticaseibacillus casei (strain BL23) (Lactobacillus casei) protein is Large ribosomal subunit protein bL12.